Here is a 463-residue protein sequence, read N- to C-terminus: GTPase Der (463 aa).

EngA-type G domains follow at residues 27-190 and 200-373; these read PVVA…PEVG and RRVA…ASWD. Residues 33-40, 80-84, 142-145, 206-213, 253-257, and 318-321 each bind GTP; these read GRPNVGKS, DTGGW, NKVD, GKPNVGKS, DTAGL, and NKWD. The KH-like domain maps to 374–456; sequence TRIATGPLNT…PIRVNVRVRE (83 aa).

Belongs to the TRAFAC class TrmE-Era-EngA-EngB-Septin-like GTPase superfamily. EngA (Der) GTPase family. As to quaternary structure, associates with the 50S ribosomal subunit.

Functionally, GTPase that plays an essential role in the late steps of ribosome biogenesis. This is GTPase Der from Mycobacterium bovis (strain ATCC BAA-935 / AF2122/97).